Here is a 159-residue protein sequence, read N- to C-terminus: Ribosomal RNA large subunit methyltransferase H (159 aa).

S-adenosyl-L-methionine-binding positions include L76, G108, and 127–132 (FSKMTF).

It belongs to the RNA methyltransferase RlmH family. Homodimer.

It is found in the cytoplasm. It catalyses the reaction pseudouridine(1915) in 23S rRNA + S-adenosyl-L-methionine = N(3)-methylpseudouridine(1915) in 23S rRNA + S-adenosyl-L-homocysteine + H(+). Functionally, specifically methylates the pseudouridine at position 1915 (m3Psi1915) in 23S rRNA. The sequence is that of Ribosomal RNA large subunit methyltransferase H from Clostridium botulinum (strain Langeland / NCTC 10281 / Type F).